We begin with the raw amino-acid sequence, 159 residues long: Small ribosomal subunit protein uS7c (159 aa).

The tract at residues 137–159 (HAIRKKEETHKMAESNRAXAHYR) is disordered. The segment covering 141–150 (KKEETHKMAE) has biased composition (basic and acidic residues).

It belongs to the universal ribosomal protein uS7 family. In terms of assembly, part of the 30S ribosomal subunit.

It localises to the plastid. It is found in the chloroplast. Functionally, one of the primary rRNA binding proteins, it binds directly to 16S rRNA where it nucleates assembly of the head domain of the 30S subunit. The sequence is that of Small ribosomal subunit protein uS7c (rps7) from Sciadopitys verticillata (Japanese umbrella-pine).